Here is a 512-residue protein sequence, read N- to C-terminus: Dihydroniloticin synthase CYP71CD1 (512 aa).

Residues 7-27 (YFTVTSLLVFLTFLLRLVWGW) traverse the membrane as a helical segment. C451 serves as a coordination point for heme.

The protein belongs to the cytochrome P450 family. Heme is required as a cofactor. As to expression, accumulates in mature fruits and in juice vesicles.

The protein localises to the membrane. The catalysed reaction is tirucalla-7,24-dien-3beta-ol + 2 reduced [NADPH--hemoprotein reductase] + 2 O2 = dihydroniloticin + 2 oxidized [NADPH--hemoprotein reductase] + 2 H2O + 2 H(+). Its pathway is secondary metabolite biosynthesis; terpenoid biosynthesis. Monooxygenase involved in the biosynthesis of limonoids triterpene natural products such as limonin, a compound with insecticidal activity responsible for the bitter taste in citrus. Catalyzes the conversion of tirucalladienol to dihydroniloticin. The chain is Dihydroniloticin synthase CYP71CD1 from Citrus sinensis (Sweet orange).